We begin with the raw amino-acid sequence, 293 residues long: Elongation factor Ts (293 aa).

The involved in Mg(2+) ion dislocation from EF-Tu stretch occupies residues 79 to 82; sequence TDFV.

It belongs to the EF-Ts family.

It localises to the cytoplasm. In terms of biological role, associates with the EF-Tu.GDP complex and induces the exchange of GDP to GTP. It remains bound to the aminoacyl-tRNA.EF-Tu.GTP complex up to the GTP hydrolysis stage on the ribosome. The sequence is that of Elongation factor Ts from Bacillus licheniformis (strain ATCC 14580 / DSM 13 / JCM 2505 / CCUG 7422 / NBRC 12200 / NCIMB 9375 / NCTC 10341 / NRRL NRS-1264 / Gibson 46).